Reading from the N-terminus, the 141-residue chain is Endoribonuclease YbeY (141 aa).

Zn(2+) contacts are provided by H107, H111, and D117.

The protein belongs to the endoribonuclease YbeY family. Zn(2+) serves as cofactor.

Its subcellular location is the cytoplasm. Functionally, single strand-specific metallo-endoribonuclease involved in late-stage 70S ribosome quality control and in maturation of the 3' terminus of the 16S rRNA. This chain is Endoribonuclease YbeY, found in Endomicrobium trichonymphae.